We begin with the raw amino-acid sequence, 409 residues long: MVKGVKGRPNVLAIVLAGGEGKRLFPLTEDRAKPAVPFGGTYRLIDFVLSNLVNSGFLKIAVLTQYKSHSLDRHISLSWNVSGPTGQYIASVPAQQRLGKRWFTGSADAILQSLNLISDEKPDYVIVFGADHVYRMDPSQMLDEHIASGRAVSVAGIRVPREEATAFGCIQSDDDGNITEFLEKPADPPGTPDDPDMTYASMGNYIFTTEALIQALKDDENNENSDHDMGGDIIPYFVSRNDAHVYDFSGNIVPGATERDKGYWRDVGTIDAFYECHMDLISVHPIFNLYNSEWPIHTTSEGNLPPAKFVRGGIAQSSMVSSGSIISAGTVRNSVLSNNVVVEEGATVEGAVLMPGVRIGKGAVVRHAILDKNVVVRDGELIGVDHVRDAQRFKVSAGGVVVVGKNQVV.

Alpha-D-glucose 1-phosphate is bound by residues G168, 183-184, and S201; that span reads EK.

The protein belongs to the bacterial/plant glucose-1-phosphate adenylyltransferase family. Homotetramer.

The enzyme catalyses alpha-D-glucose 1-phosphate + ATP + H(+) = ADP-alpha-D-glucose + diphosphate. It functions in the pathway glycan biosynthesis; glycogen biosynthesis. In terms of biological role, involved in the biosynthesis of ADP-glucose, a building block required for the elongation reactions to produce glycogen. Catalyzes the reaction between ATP and alpha-D-glucose 1-phosphate (G1P) to produce pyrophosphate and ADP-Glc. The polypeptide is Glucose-1-phosphate adenylyltransferase (Corynebacterium glutamicum (strain R)).